An 800-amino-acid chain; its full sequence is Phenylalanine--tRNA ligase beta subunit (800 aa).

The 116-residue stretch at 39–154 (TKDIKNLVVG…ESQVPGTDAL (116 aa)) folds into the tRNA-binding domain. The B5 domain maps to 408–483 (AFITPIDITA…RIYGYDDIPS (76 aa)). Residues aspartate 461, aspartate 467, glutamate 470, and glutamate 471 each contribute to the Mg(2+) site. The region spanning 708–800 (PRFPGMSRDI…ALIEQGAVIR (93 aa)) is the FDX-ACB domain.

Belongs to the phenylalanyl-tRNA synthetase beta subunit family. Type 1 subfamily. As to quaternary structure, tetramer of two alpha and two beta subunits. Requires Mg(2+) as cofactor.

The protein resides in the cytoplasm. The enzyme catalyses tRNA(Phe) + L-phenylalanine + ATP = L-phenylalanyl-tRNA(Phe) + AMP + diphosphate + H(+). This Staphylococcus aureus (strain MSSA476) protein is Phenylalanine--tRNA ligase beta subunit.